We begin with the raw amino-acid sequence, 475 residues long: Aspartyl/glutamyl-tRNA(Asn/Gln) amidotransferase subunit B (475 aa).

It belongs to the GatB/GatE family. GatB subfamily. As to quaternary structure, heterotrimer of A, B and C subunits.

It carries out the reaction L-glutamyl-tRNA(Gln) + L-glutamine + ATP + H2O = L-glutaminyl-tRNA(Gln) + L-glutamate + ADP + phosphate + H(+). The catalysed reaction is L-aspartyl-tRNA(Asn) + L-glutamine + ATP + H2O = L-asparaginyl-tRNA(Asn) + L-glutamate + ADP + phosphate + 2 H(+). Allows the formation of correctly charged Asn-tRNA(Asn) or Gln-tRNA(Gln) through the transamidation of misacylated Asp-tRNA(Asn) or Glu-tRNA(Gln) in organisms which lack either or both of asparaginyl-tRNA or glutaminyl-tRNA synthetases. The reaction takes place in the presence of glutamine and ATP through an activated phospho-Asp-tRNA(Asn) or phospho-Glu-tRNA(Gln). This is Aspartyl/glutamyl-tRNA(Asn/Gln) amidotransferase subunit B from Mycoplasma mobile (strain ATCC 43663 / 163K / NCTC 11711) (Mesomycoplasma mobile).